We begin with the raw amino-acid sequence, 74 residues long: Anaphase-promoting complex subunit 13 (74 aa).

It belongs to the APC13 family. In terms of assembly, the APC/C is composed of at least 12 subunits.

The protein resides in the nucleus. It functions in the pathway protein modification; protein ubiquitination. Its function is as follows. Component of the anaphase promoting complex/cyclosome (APC/C), a cell cycle-regulated E3 ubiquitin ligase that controls progression through mitosis and the G1 phase of the cell cycle. The APC/C complex acts by mediating ubiquitination and subsequent degradation of target proteins: it mainly mediates the formation of 'Lys-11'-linked polyubiquitin chains and, to a lower extent, the formation of 'Lys-48'- and 'Lys-63'-linked polyubiquitin chains. The APC/C complex catalyzes assembly of branched 'Lys-11'-/'Lys-48'-linked branched ubiquitin chains on target proteins. This is Anaphase-promoting complex subunit 13 (anapc13) from Xenopus tropicalis (Western clawed frog).